A 180-amino-acid chain; its full sequence is MDIGTISSRYAKALFSLAKDKEQESRVYDDMKMLADSFSMEPELRGALSNPIVSVPEKVKLLTAAGGIEVCELYSRFINLVLAHKRETLLPFIAYIYIHLYRKEKKITRVRFDTAVAVDDAVKSHLQDKLRKETGCTIEFSGHVEPELIGGFRLRIGNYRIDASYATQLRDIRTGLLENR.

This sequence belongs to the ATPase delta chain family. F-type ATPases have 2 components, F(1) - the catalytic core - and F(0) - the membrane proton channel. F(1) has five subunits: alpha(3), beta(3), gamma(1), delta(1), epsilon(1). F(0) has three main subunits: a(1), b(2) and c(10-14). The alpha and beta chains form an alternating ring which encloses part of the gamma chain. F(1) is attached to F(0) by a central stalk formed by the gamma and epsilon chains, while a peripheral stalk is formed by the delta and b chains.

It is found in the cell inner membrane. Functionally, f(1)F(0) ATP synthase produces ATP from ADP in the presence of a proton or sodium gradient. F-type ATPases consist of two structural domains, F(1) containing the extramembraneous catalytic core and F(0) containing the membrane proton channel, linked together by a central stalk and a peripheral stalk. During catalysis, ATP synthesis in the catalytic domain of F(1) is coupled via a rotary mechanism of the central stalk subunits to proton translocation. This protein is part of the stalk that links CF(0) to CF(1). It either transmits conformational changes from CF(0) to CF(1) or is implicated in proton conduction. This Parabacteroides distasonis (strain ATCC 8503 / DSM 20701 / CIP 104284 / JCM 5825 / NCTC 11152) protein is ATP synthase subunit delta.